The primary structure comprises 502 residues: Neuronal acetylcholine receptor subunit alpha-7 (502 aa).

Residues 1–22 (MCGGRGGIWLALAAALLHVSLQ) form the signal peptide. At 23 to 233 (GEFQRRLYKE…VTMRRRTLYY (211 aa)) the chain is on the extracellular side. Ca(2+) contacts are provided by Arg42 and Val44. N-linked (GlcNAc...) asparagine glycosylation is found at Asn46, Asn90, and Asn133. The cysteines at positions 150 and 164 are disulfide-linked. Ca(2+) contacts are provided by Ser172 and Tyr210. A disulfide bridge connects residues Cys212 and Cys213. A run of 3 helical transmembrane segments spans residues 234–254 (GLNLLIPCVLISALALLVFLL), 262–282 (ISLGITVLLSLTVFMLLVAEI), and 295–315 (QYFASTMIIVGLSVVVTVIVL). The tract at residues 260-267 (EKISLGIT) is essential for TMEM35A/NACHO-mediated proper subunit assembly and trafficking to cell membrane. The Cytoplasmic portion of the chain corresponds to 316–469 (RYHHHDPDGG…WKFAACVVDR (154 aa)). A helical membrane pass occupies residues 470-490 (LCLMAFSVFTIICTIGILMSA).

It belongs to the ligand-gated ion channel (TC 1.A.9) family. Acetylcholine receptor (TC 1.A.9.1) subfamily. Alpha-7/CHRNA7 sub-subfamily. In terms of assembly, homopentamer. Can also form heteropentamers with CHRNB2, mainly found in basal forebrain cholinergic neurons. Interacts with RIC3; which is required for proper folding and assembly. Interacts with LYPD6. Interacts with CANX. Post-translationally, glycosylations at Asn-46, Asn-90 and Asn-133 are essential for TMEM35A/NACHO-mediated proper subunit assembly and trafficking to the cell membrane. As to expression, expressed in neurons. Expressed in umbrella cells of urothelium (at protein level).

The protein localises to the postsynaptic cell membrane. The protein resides in the cell membrane. The enzyme catalyses Ca(2+)(in) = Ca(2+)(out). It carries out the reaction K(+)(in) = K(+)(out). It catalyses the reaction Na(+)(in) = Na(+)(out). The catalysed reaction is choline(out) = choline(in). The enzyme catalyses NH4(+)(in) = NH4(+)(out). It carries out the reaction L-arginine(in) = L-arginine(out). It catalyses the reaction guanidine(out) = guanidine(in). Activated by a myriad of ligands such as acetylcholine, cytisine, nicotine, choline and epibatidine. Oligomeric amyloid-beta protein 42 activates specifially CHRNA7:CHRNB2 nAchRs. Activity is modulated by positive allosteric modulators (PAMs), such as flavonoids, with a wide range of chemical diversity, pharmacological sensitivity and efficacy. AChR activity is inhibited by the antagonists alpha-conotoxons RgIA, ImI and ImII, small disulfide-constrained peptides from cone snails. Alpha-conotoxin PnIC selectively inhibits CHRNA7:CHRNB2 over CHRNA7 homopentamer. Functionally, component of neuronal acetylcholine receptors (nAChRs) that function as pentameric, ligand-gated cation channels with high calcium permeability among other activities. nAChRs are excitatory neurotrasnmitter receptors formed by a collection of nAChR subunits known to mediate synaptic transmission in the nervous system and the neuromuscular junction. Each nAchR subunit confers differential attributes to channel properties, including activation, deactivation and desensitization kinetics, pH sensitivity, cation permeability, and binding to allosteric modulators. CHRNA7 forms homopentameric neuronal acetylcholine receptors abundantly expressed in the central nervous system, characterized by fast desensitization and high calcium permeability. Also forms heteropentamers with CHRNB2, mainly expressed in basal forebrain cholinergic neurons. Involved in the modulation of calcium-dependent signaling pathways and influences the release of neurotransmitters, including dopamine, glutamate and GABA. Also expressed in non-neuronal cells such as immune cells like lymphocytes, monocytes and macrophages. In T cells, activation induces metabotropic signaling that results in an increase of intracellular Ca2+ concentrations, independent of ionotropic receptor functions. In macrophages, required for acetylcholine-mediated inhibition of TNF and other inflammatory cytokine release. Once activated by acetylcholine, nicotine or other agonists, selectively inhibits production of pro-inflammatory cytokines while leaving anti-inflammatory cytokines undisturbed. Stimulates the cholinergic anti-inflammatory pathway, controlling inflammation by inhibiting NFKB nuclear translocation and activating the JAK2-STAT3 pathway, independently of ion channel activity. Also expressed in the urothelium where it modulates reflex bladder activity by increasing intracellular calcium through internal stores and decreasing basal ATP release. The protein is Neuronal acetylcholine receptor subunit alpha-7 (Chrna7) of Rattus norvegicus (Rat).